Here is a 324-residue protein sequence, read N- to C-terminus: Biotin synthase (324 aa).

The Radical SAM core domain occupies 43-273; the sequence is FCGNYFNFCS…HVFLRLAGGR (231 aa). Positions 61, 65, and 68 each coordinate [4Fe-4S] cluster. [2Fe-2S] cluster is bound by residues S105, C138, C198, and R268.

The protein belongs to the radical SAM superfamily. Biotin synthase family. Homodimer. [4Fe-4S] cluster serves as cofactor. Requires [2Fe-2S] cluster as cofactor.

The catalysed reaction is (4R,5S)-dethiobiotin + (sulfur carrier)-SH + 2 reduced [2Fe-2S]-[ferredoxin] + 2 S-adenosyl-L-methionine = (sulfur carrier)-H + biotin + 2 5'-deoxyadenosine + 2 L-methionine + 2 oxidized [2Fe-2S]-[ferredoxin]. Its pathway is cofactor biosynthesis; biotin biosynthesis; biotin from 7,8-diaminononanoate: step 2/2. Functionally, catalyzes the conversion of dethiobiotin (DTB) to biotin by the insertion of a sulfur atom into dethiobiotin via a radical-based mechanism. In Campylobacter hominis (strain ATCC BAA-381 / DSM 21671 / CCUG 45161 / LMG 19568 / NCTC 13146 / CH001A), this protein is Biotin synthase.